The primary structure comprises 174 residues: Large ribosomal subunit protein uL10 (174 aa).

Belongs to the universal ribosomal protein uL10 family. In terms of assembly, part of the ribosomal stalk of the 50S ribosomal subunit. The N-terminus interacts with L11 and the large rRNA to form the base of the stalk. The C-terminus forms an elongated spine to which L12 dimers bind in a sequential fashion forming a multimeric L10(L12)X complex.

Functionally, forms part of the ribosomal stalk, playing a central role in the interaction of the ribosome with GTP-bound translation factors. The protein is Large ribosomal subunit protein uL10 of Coxiella burnetii (strain CbuK_Q154) (Coxiella burnetii (strain Q154)).